An 89-amino-acid chain; its full sequence is Small ribosomal subunit protein bS16c (89 aa).

Belongs to the bacterial ribosomal protein bS16 family.

Its subcellular location is the plastid. It is found in the chloroplast. The sequence is that of Small ribosomal subunit protein bS16c from Morus indica (Mulberry).